The chain runs to 789 residues: Probable phosphoketolase 1 (789 aa).

This sequence belongs to the XFP family. The cofactor is thiamine diphosphate.

The chain is Probable phosphoketolase 1 from Rhizobium meliloti (strain 1021) (Ensifer meliloti).